A 358-amino-acid polypeptide reads, in one-letter code: uncharacterized protein (358 aa).

The protein belongs to the methyltransferase superfamily.

This is an uncharacterized protein from Mycobacterium tuberculosis (strain CDC 1551 / Oshkosh).